A 111-amino-acid polypeptide reads, in one-letter code: Large ribosomal subunit protein eL31 (111 aa).

This sequence belongs to the eukaryotic ribosomal protein eL31 family.

The sequence is that of Large ribosomal subunit protein eL31 (rpl31) from Dictyostelium discoideum (Social amoeba).